Consider the following 53-residue polypeptide: GRPSARYDAPYCSEEELQACDCSHNPVRDACQCAYDPAGSPACDCYCVEPWRR.

A propeptide spanning residues Gly-1 to Ala-5 is cleaved from the precursor.

In terms of processing, contains 4 disulfide bonds. Expressed by the venom duct.

It localises to the secreted. Functionally, probable neurotoxin with unknown target. Possibly targets ion channels. The polypeptide is Conotoxin Cal22e (Californiconus californicus (California cone)).